We begin with the raw amino-acid sequence, 243 residues long: Pyridoxine 5'-phosphate synthase (243 aa).

A 3-amino-2-oxopropyl phosphate-binding site is contributed by Asn-9. 11 to 12 (DH) is a binding site for 1-deoxy-D-xylulose 5-phosphate. Arg-20 contacts 3-amino-2-oxopropyl phosphate. The active-site Proton acceptor is the His-45. Positions 47 and 52 each coordinate 1-deoxy-D-xylulose 5-phosphate. The Proton acceptor role is filled by Glu-72. 1-deoxy-D-xylulose 5-phosphate is bound at residue Thr-102. His-193 serves as the catalytic Proton donor. Residues Gly-194 and 215 to 216 (GH) each bind 3-amino-2-oxopropyl phosphate.

The protein belongs to the PNP synthase family. As to quaternary structure, homooctamer; tetramer of dimers.

It localises to the cytoplasm. It carries out the reaction 3-amino-2-oxopropyl phosphate + 1-deoxy-D-xylulose 5-phosphate = pyridoxine 5'-phosphate + phosphate + 2 H2O + H(+). Its pathway is cofactor biosynthesis; pyridoxine 5'-phosphate biosynthesis; pyridoxine 5'-phosphate from D-erythrose 4-phosphate: step 5/5. In terms of biological role, catalyzes the complicated ring closure reaction between the two acyclic compounds 1-deoxy-D-xylulose-5-phosphate (DXP) and 3-amino-2-oxopropyl phosphate (1-amino-acetone-3-phosphate or AAP) to form pyridoxine 5'-phosphate (PNP) and inorganic phosphate. The polypeptide is Pyridoxine 5'-phosphate synthase (Photobacterium profundum (strain SS9)).